The following is a 1722-amino-acid chain: Lymphocyte antigen 75 (1722 aa).

A signal peptide spans 1-27 (MGTRRVTPGCAAGLLVLLLRCFGLAEP). Residues 28–1666 (SEFSGDDSFT…VVCKVPLSPD (1639 aa)) are Extracellular-facing. One can recognise a Ricin B-type lectin domain in the interval 32–182 (GDDSFTIVNE…FLVGETWHHD (151 aa)). Asn-135 is a glycosylation site (N-linked (GlcNAc...) asparagine). In terms of domain architecture, Fibronectin type-II spans 164–211 (SYGRPCEFPFLVGETWHHDCIRDENHSGPWCATTLNYEYDQKWGICLK). Intrachain disulfides connect Cys-169–Cys-194, Cys-183–Cys-209, Cys-247–Cys-340, and Cys-317–Cys-332. The C-type lectin 1 domain maps to 225-341 (QIGSCYQFNN…CEAQQPYVCK (117 aa)). N-linked (GlcNAc...) asparagine glycans are attached at residues Asn-345 and Asn-377. C-type lectin domains follow at residues 368–486 (QNGF…YVCK), 493–625 (NDTR…ICKK), and 652–791 (SNLS…WVCQ). 2 cysteine pairs are disulfide-bonded: Cys-389-Cys-485 and Cys-462-Cys-477. Asn-529 carries N-linked (GlcNAc...) asparagine glycosylation. Cystine bridges form between Cys-597/Cys-614, Cys-678/Cys-790, and Cys-752/Cys-782. Residues Asn-843 and Asn-865 are each glycosylated (N-linked (GlcNAc...) asparagine). Tyr-933 is modified (phosphotyrosine). N-linked (GlcNAc...) asparagine glycosylation is found at Asn-934 and Asn-1076. C-type lectin domains lie at 958–1091 (FQNK…LCQK) and 1110–1222 (YLNN…ICYY). 2 cysteine pairs are disulfide-bonded: Cys-1060-Cys-1080 and Cys-1197-Cys-1211. Asn-1225, Asn-1320, and Asn-1392 each carry an N-linked (GlcNAc...) asparagine glycan. Positions 1251 to 1374 (FQNSCYNFMI…VIDETLHFYQ (124 aa)) constitute a C-type lectin 7 domain. C-type lectin domains are found at residues 1401 to 1513 (YEDG…ICYK) and 1542 to 1661 (YGDH…VCKV). Cys-1488 and Cys-1502 are disulfide-bonded. Residues Asn-1593 and Asn-1626 are each glycosylated (N-linked (GlcNAc...) asparagine). Cys-1635 and Cys-1650 are disulfide-bonded. Residues 1667-1691 (YRGIAVLFAVLSVLALISGLIWFLV) form a helical membrane-spanning segment. The Cytoplasmic portion of the chain corresponds to 1692 to 1722 (QRNHFRWTGLSSVRYEHGANEDEVMLPSFHD). 2 positions are modified to phosphoserine: Ser-1703 and Ser-1719.

As to expression, expressed in the thymus and cultured bone marrow cells.

The protein resides in the membrane. Its function is as follows. Acts as an endocytic receptor to direct captured antigens from the extracellular space to a specialized antigen-processing compartment. Causes reduced proliferation of B lymphocytes. This is Lymphocyte antigen 75 (LY75) from Mesocricetus auratus (Golden hamster).